Consider the following 676-residue polypeptide: RNA helicase NPH-II (676 aa).

A Helicase ATP-binding domain is found at 172–347 (FLAWISHRPV…IFLPNPAFIH (176 aa)). 185–192 (GGTGVGKT) lines the ATP pocket. The DEXH box motif lies at 296-299 (DEVH). Residues 366–535 (NPSSRMAYIE…NYILYANKFN (170 aa)) form the Helicase C-terminal domain.

This sequence belongs to the DEAD box helicase family. DEAH subfamily. In terms of assembly, monomer.

It localises to the virion. The catalysed reaction is ATP + H2O = ADP + phosphate + H(+). Functionally, NTP-dependent helicase that catalyzes unidirectional unwinding of 3'tailed duplex RNAs and plays an important role during transcription of early mRNAs, presumably by preventing R-loop formation behind the elongating RNA polymerase. Might also play a role in the export of newly synthesized mRNA chains out of the core into the cytoplasm. Required for replication and propagation of viral particles. In Monkeypox virus, this protein is RNA helicase NPH-II (OPG084).